The sequence spans 321 residues: NADPH-dependent codeinone reductase 1-5 (321 aa).

Positions 27 and 51 each coordinate NADPH. Residues Tyr56 and His119 each act as proton donor in the active site. His119 is a substrate binding site. NADPH is bound by residues Gln187, Ser214, Leu216, Ser264, and Arg269.

Belongs to the aldo/keto reductase family. As to expression, latex secreting cells (laticifer cells). Expressed constitutively and ubiquitously with highest levels in capsules.

The protein resides in the cytoplasm. Its subcellular location is the cytosol. The enzyme catalyses codeine + NADP(+) = codeinone + NADPH + H(+). The catalysed reaction is neopine + NADP(+) = neopinone + NADPH + H(+). It carries out the reaction morphine + NADP(+) = morphinone + NADPH + H(+). It catalyses the reaction neomorphine + NADP(+) = neomorphinone + NADPH + H(+). The protein operates within alkaloid biosynthesis; morphine biosynthesis. NADPH-dependent codeinone reductase involved in biosynthesis of morphinan-type benzylisoquinoline and opiate alkaloids natural products. Reduces codeinone to codeine in the penultimate step in morphine biosynthesis. Can use morphinone, hydrocodone and hydromorphone as substrate during reductive reaction with NADPH as cofactor, and morphine and dihydrocodeine as substrate during oxidative reaction with NADP as cofactor. Converts morphinone to morphine, and neomorphinone to neomorphine. Reduces irreversibly neopinone, a spontaneous isomer of codeinone, to neopine; in planta, neopine levels are limited to low levels. The sequence is that of NADPH-dependent codeinone reductase 1-5 from Papaver somniferum (Opium poppy).